The primary structure comprises 587 residues: Aspartate--tRNA ligase (587 aa).

Glutamate 174 is an L-aspartate binding site. The tract at residues glutamine 198–lysine 201 is aspartate. Arginine 220 serves as a coordination point for L-aspartate. ATP contacts are provided by residues arginine 220 to glutamate 222 and glutamine 229. Histidine 443 lines the L-aspartate pocket. Glutamate 477 contributes to the ATP binding site. Arginine 484 is a binding site for L-aspartate. Glycine 529 to arginine 532 provides a ligand contact to ATP.

It belongs to the class-II aminoacyl-tRNA synthetase family. Type 1 subfamily. Homodimer.

The protein localises to the cytoplasm. The catalysed reaction is tRNA(Asp) + L-aspartate + ATP = L-aspartyl-tRNA(Asp) + AMP + diphosphate. Its function is as follows. Catalyzes the attachment of L-aspartate to tRNA(Asp) in a two-step reaction: L-aspartate is first activated by ATP to form Asp-AMP and then transferred to the acceptor end of tRNA(Asp). The chain is Aspartate--tRNA ligase from Streptococcus pneumoniae serotype 19F (strain G54).